Here is a 293-residue protein sequence, read N- to C-terminus: Microtubule-associated protein RP/EB family member 1B (293 aa).

Residues 13–115 enclose the Calponin-homology (CH) domain; the sequence is FVGRNEILSW…FLQWLKRFCD (103 aa). Disordered regions lie at residues 124 to 188 and 262 to 293; these read ENYN…SAEV and LGLE…ETQT. The span at 129–141 shows a compositional bias: basic and acidic residues; the sequence is VERRSRGGREKSV. Over residues 151–166 the composition is skewed to polar residues; sequence LQTNNMHHPPVATSNK. The EB1 C-terminal domain maps to 180–250; it reads GGSNSSAEVQ…LYATDANESV (71 aa). Acidic residues predominate over residues 266-285; the sequence is GYEEEGKEEEEEEEEEEEEA.

This sequence belongs to the MAPRE family. Homodimer and heterodimer with EB1A. In terms of tissue distribution, highly expressed in guard cells of leaf stomata, pollen grains and pollen tubes. Expressed in young roots.

The protein resides in the cytoplasm. Its subcellular location is the cytoskeleton. The protein localises to the spindle pole. It is found in the phragmoplast. Functionally, binds to the plus end of microtubules and regulates the dynamics of the microtubule cytoskeleton. May be involved in anchoring microtubules to their nucleation sites and/or functioning as a reservoir for distribution to the growing end. In plants, microtubule minus ends are not necessarily severed from the nucleation site and transported to the plus end of a microtubule as part of the recycling process. May play a role in endomembrane organization during polarized growth of plant cells. This Arabidopsis thaliana (Mouse-ear cress) protein is Microtubule-associated protein RP/EB family member 1B (EB1B).